Here is a 241-residue protein sequence, read N- to C-terminus: Chloride intracellular channel protein 1 (241 aa).

Residue Ala-2 is modified to N-acetylalanine. Residues 2–90 are required for insertion into the membrane; sequence AEEQPQVELF…EEFLEAVLCP (89 aa). Lys-13 carries the post-translational modification N6-acetyllysine. Positions 24–27 match the G-site motif; sequence CPFS. An intrachain disulfide couples Cys-24 to Cys-59. Residues 26-46 traverse the membrane as a helical segment; the sequence is FSQRLFMVLWLKGVTFNVTTV. In terms of domain architecture, GST C-terminal spans 93 to 233; it reads YPKLAALNPE…PDDEEIELAY (141 aa). Lys-119 is modified (N6-acetyllysine). Ser-121 carries the phosphoserine modification. Lys-131 carries the post-translational modification N6-acetyllysine. Phosphoserine occurs at positions 156 and 211. Position 233 is a phosphotyrosine (Tyr-233).

The protein belongs to the chloride channel CLIC family. In terms of assembly, monomer. Homodimer (in vitro). Interacts with TRAPPC2. Dimerization requires a conformation change that leads to the exposure of a large hydrophobic surface. In vivo, this may lead to membrane insertion. Expressed in neonatal and adult cardiomyocytes (at protein level).

It localises to the nucleus. Its subcellular location is the nucleus membrane. It is found in the cytoplasm. The protein resides in the cell membrane. The protein localises to the endoplasmic reticulum. It catalyses the reaction L-dehydroascorbate + 2 glutathione = glutathione disulfide + L-ascorbate. The catalysed reaction is chloride(in) = chloride(out). The enzyme catalyses iodide(out) = iodide(in). It carries out the reaction thiocyanate(in) = thiocyanate(out). It catalyses the reaction nitrate(in) = nitrate(out). The catalysed reaction is bromide(in) = bromide(out). The enzyme catalyses fluoride(in) = fluoride(out). Functionally, in the soluble state, catalyzes glutaredoxin-like thiol disulfide exchange reactions with reduced glutathione as electron donor. Reduces selenite and dehydroascorbate and may act as an antioxidant during oxidative stress response. Can insert into membranes and form voltage-dependent multi-ion conductive channels. Membrane insertion seems to be redox-regulated and may occur only under oxidizing conditions. Involved in regulation of the cell cycle. This chain is Chloride intracellular channel protein 1, found in Rattus norvegicus (Rat).